Consider the following 286-residue polypeptide: L-rhamnose-binding lectin CSL1 (286 aa).

SUEL-type lectin domains follow at residues T96–L186 and T193–L280.

L-rhamnose binding lectin. Has hemagglutinating activity towards rabbit erythrocytes, but not human type B erythrocytes. Hemagglutinating activity is inhibited by smooth-type lipopolysaccharide (LPS) from K.pneumoniae, E.coli K-235, S.flexneri 1A, A.salmonicida and S.minnesota and rough-type LPS from S.flexneri, but not by rough-type LPS from E.coli K12 and E.coli EH100. Agglutinates E.coli K12 and B.subtilis. The protein is L-rhamnose-binding lectin CSL1 of Oncorhynchus keta (Chum salmon).